A 245-amino-acid polypeptide reads, in one-letter code: Enolase-phosphatase E1 (245 aa).

Belongs to the HAD-like hydrolase superfamily. MasA/MtnC family. In terms of assembly, monomer. Mg(2+) is required as a cofactor.

It catalyses the reaction 5-methylsulfanyl-2,3-dioxopentyl phosphate + H2O = 1,2-dihydroxy-5-(methylsulfanyl)pent-1-en-3-one + phosphate. It functions in the pathway amino-acid biosynthesis; L-methionine biosynthesis via salvage pathway; L-methionine from S-methyl-5-thio-alpha-D-ribose 1-phosphate: step 3/6. It participates in amino-acid biosynthesis; L-methionine biosynthesis via salvage pathway; L-methionine from S-methyl-5-thio-alpha-D-ribose 1-phosphate: step 4/6. In terms of biological role, bifunctional enzyme that catalyzes the enolization of 2,3-diketo-5-methylthiopentyl-1-phosphate (DK-MTP-1-P) into the intermediate 2-hydroxy-3-keto-5-methylthiopentenyl-1-phosphate (HK-MTPenyl-1-P), which is then dephosphorylated to form the acireductone 1,2-dihydroxy-3-keto-5-methylthiopentene (DHK-MTPene). The polypeptide is Enolase-phosphatase E1 (Synechococcus sp. (strain CC9902)).